The sequence spans 180 residues: Prorelaxin (180 aa).

The first 25 residues, 1-25 (MLRLFLSHLLGVWLLLSLRARKIPA), serve as a signal peptide directing secretion. Intrachain disulfides connect Cys33–Cys167, Cys45–Cys180, and Cys166–Cys171. The propeptide at 53-154 (SSQQHREPRQ…RSRLDAHSRI (102 aa)) is connecting peptide.

It belongs to the insulin family. Heterodimer of a B chain and an A chain linked by two disulfide bonds. As to expression, expressed by the placenta. Exclusively detected in cells located in the lamellar placental labyrinth and absent from other placental and non-placental uterine parts.

It is found in the secreted. In terms of biological role, relaxin is an ovarian hormone that acts with estrogen to produce dilatation of the birth canal in many mammals. The polypeptide is Prorelaxin (RLN) (Felis catus (Cat)).